The following is a 393-amino-acid chain: NADH-quinone oxidoreductase subunit D (393 aa).

The protein belongs to the complex I 49 kDa subunit family. As to quaternary structure, NDH-1 is composed of 14 different subunits. Subunits NuoB, C, D, E, F, and G constitute the peripheral sector of the complex.

The protein localises to the cell inner membrane. It carries out the reaction a quinone + NADH + 5 H(+)(in) = a quinol + NAD(+) + 4 H(+)(out). In terms of biological role, NDH-1 shuttles electrons from NADH, via FMN and iron-sulfur (Fe-S) centers, to quinones in the respiratory chain. The immediate electron acceptor for the enzyme in this species is believed to be ubiquinone. Couples the redox reaction to proton translocation (for every two electrons transferred, four hydrogen ions are translocated across the cytoplasmic membrane), and thus conserves the redox energy in a proton gradient. This is NADH-quinone oxidoreductase subunit D from Ehrlichia canis (strain Jake).